The chain runs to 869 residues: Leucine--tRNA ligase (869 aa).

A 'HIGH' region motif is present at residues 42 to 52; it reads PYPSGRLHMGH. Positions 620 to 624 match the 'KMSKS' region motif; it reads KMSKS. K623 contacts ATP.

This sequence belongs to the class-I aminoacyl-tRNA synthetase family.

The protein localises to the cytoplasm. The catalysed reaction is tRNA(Leu) + L-leucine + ATP = L-leucyl-tRNA(Leu) + AMP + diphosphate. In Hamiltonella defensa subsp. Acyrthosiphon pisum (strain 5AT), this protein is Leucine--tRNA ligase.